A 435-amino-acid chain; its full sequence is Trigger factor (435 aa).

Residues 163-248 (GDYVTFDFKG…IKEIKVKELP (86 aa)) form the PPIase FKBP-type domain.

This sequence belongs to the FKBP-type PPIase family. Tig subfamily.

It is found in the cytoplasm. The enzyme catalyses [protein]-peptidylproline (omega=180) = [protein]-peptidylproline (omega=0). Its function is as follows. Involved in protein export. Acts as a chaperone by maintaining the newly synthesized protein in an open conformation. Functions as a peptidyl-prolyl cis-trans isomerase. The protein is Trigger factor of Geotalea daltonii (strain DSM 22248 / JCM 15807 / FRC-32) (Geobacter daltonii).